The primary structure comprises 202 residues: Small ribosomal subunit protein uS4 (202 aa).

The tract at residues 22-43 (TRKNARRAYPPGQHGQNRRKRS) is disordered. Positions 90–152 (MRLDNTVFRL…DKSRKLVQAN (63 aa)) constitute an S4 RNA-binding domain.

This sequence belongs to the universal ribosomal protein uS4 family. In terms of assembly, part of the 30S ribosomal subunit. Contacts protein S5. The interaction surface between S4 and S5 is involved in control of translational fidelity.

One of the primary rRNA binding proteins, it binds directly to 16S rRNA where it nucleates assembly of the body of the 30S subunit. Its function is as follows. With S5 and S12 plays an important role in translational accuracy. The polypeptide is Small ribosomal subunit protein uS4 (Gloeothece citriformis (strain PCC 7424) (Cyanothece sp. (strain PCC 7424))).